The sequence spans 219 residues: MDPAPGVLDPRAAPPALLGTPQAEVLEDVLREQFGPLPQLAAVCRLKRLPSGGYSSTENLQLVLERRRVANAKERERIKNLNRGFARLKALVPFLPQSRKPSKVDILKGATEYIQVLSDLLEGAKDSKKQDPDEQSYSNNSSESHTSSARQLSRNITQHISCAFGLKNEEEGPWADGGSGEPAHACRHSVMSTTEIISPTRSLDRFPEVELLSHRLPQV.

The region spanning 65-117 is the bHLH domain; sequence ERRRVANAKERERIKNLNRGFARLKALVPFLPQSRKPSKVDILKGATEYIQVL. A disordered region spans residues 124–151; that stretch reads AKDSKKQDPDEQSYSNNSSESHTSSARQ. Positions 136 to 148 are enriched in low complexity; the sequence is SYSNNSSESHTSS.

In terms of assembly, heterodimer with TCF3/isoform E12. Germ cells. Expressed in the fetal ovary, but not by a range of other tissues. Expression increases across mid-gestation, rising some 40-fold by the time of primordial follicle formation.

It localises to the nucleus. Functionally, germline specific transcription factor implicated in postnatal oocyte-specific gene expression. Plays a key regulatory role in the expression of multiple oocyte-specific genes, including those that initiate folliculogenesis and those that encode the zona pellucida (ZP1, ZP2 and ZP3) required for fertilization and early embryonic survival. Essential for oocytes to survive and form primordial follicles. The persistence of FIGLA in adult females suggests that it may regulate additional pathways that are essential for normal ovarian development. Binds to the E-box (5'-CANNTG-3') of the ZPs (ZP1, ZP2, ZP3) promoters. The polypeptide is Factor in the germline alpha (FIGLA) (Homo sapiens (Human)).